Here is a 458-residue protein sequence, read N- to C-terminus: Serine protease HTRA2, mitochondrial (458 aa).

The transit peptide at 1–31 (MAALRAGRGAGWSLRGWRALWGGRWGKGPLL) directs the protein to the mitochondrion. Residues 32–133 (TPDLRALLTS…GGRGPPAVLA (102 aa)) constitute a propeptide that is removed on maturation. A helical membrane pass occupies residues 105–125 (VWLAVALGAGGAVLLLFWGGG). Residues 134–137 (SVLG) carry the IAP-binding motif motif. Residues 166–342 (ILGRHPFSGR…IPSDRLREFL (177 aa)) form a serine protease region. Active-site charge relay system residues include H198, D228, and S306. The PDZ domain occupies 364-445 (VMMLTLTPSI…QLAVRIRRGQ (82 aa)).

This sequence belongs to the peptidase S1C family. Homotrimer. Interacts with MXI2. Interacts with THAP5 under apoptotic conditions. The mature protein, but not the precursor, binds to BIRC2/c-IAP1, BIRC3/c-IAP2 and XIAP/BIRC4. Interacts with BIRC6/bruce. Interacts with AREL1 (via HECT domain); in the cytoplasm following induction of apoptosis. In terms of processing, ubiquitinated by BIRC6; this activity is inhibited by DIABLO/SMAC. Post-translationally, autoproteolytically activated.

The protein localises to the mitochondrion intermembrane space. The protein resides in the mitochondrion membrane. It catalyses the reaction Cleavage of non-polar aliphatic amino-acids at the P1 position, with a preference for Val, Ile and Met. At the P2 and P3 positions, Arg is selected most strongly with a secondary preference for other hydrophilic residues.. With respect to regulation, inhibited by BIRC6. In terms of biological role, serine protease that shows proteolytic activity against a non-specific substrate beta-casein. Promotes apoptosis by either relieving the inhibition of BIRC proteins on caspases, leading to an increase in caspase activity; or by a BIRC inhibition-independent, caspase-independent and serine protease activity-dependent mechanism. Cleaves BIRC6 and relieves its inhibition on CASP3, CASP7 and CASP9, but it is also prone to inhibition by BIRC6. Cleaves THAP5 and promotes its degradation during apoptosis. The sequence is that of Serine protease HTRA2, mitochondrial (HTRA2) from Bos taurus (Bovine).